Reading from the N-terminus, the 734-residue chain is DNA replication licensing factor MCM5 (734 aa).

S2 is subject to N-acetylserine. In terms of domain architecture, MCM spans 331-537 (IYELISKSIA…RDVMLAKHVI (207 aa)). R371 provides a ligand contact to ADP. N6-acetyllysine is present on residues K392 and K396. The Arginine finger signature appears at 512-515 (SRFD). S605 carries the post-translational modification Phosphoserine.

It belongs to the MCM family. Component of the MCM2-7 complex. The complex forms a toroidal hexameric ring with the proposed subunit order MCM2-MCM6-MCM4-MCM7-MCM3-MCM5. Component of the CMG helicase complex, a hexameric ring of related MCM2-7 subunits stabilized by CDC45 and the tetrameric GINS complex. Interacts with ANKRD17. Interacts with MCMBP. Interacts with TONSL; the interaction is direct.

Its subcellular location is the nucleus. The protein resides in the chromosome. The protein localises to the cytoplasm. It is found in the cytosol. The enzyme catalyses ATP + H2O = ADP + phosphate + H(+). Acts as a component of the MCM2-7 complex (MCM complex) which is the replicative helicase essential for 'once per cell cycle' DNA replication initiation and elongation in eukaryotic cells. Core component of CDC45-MCM-GINS (CMG) helicase, the molecular machine that unwinds template DNA during replication, and around which the replisome is built. The active ATPase sites in the MCM2-7 ring are formed through the interaction surfaces of two neighboring subunits such that a critical structure of a conserved arginine finger motif is provided in trans relative to the ATP-binding site of the Walker A box of the adjacent subunit. The six ATPase active sites, however, are likely to contribute differentially to the complex helicase activity. This chain is DNA replication licensing factor MCM5, found in Bos taurus (Bovine).